Reading from the N-terminus, the 531-residue chain is Muscarinic acetylcholine receptor M5 (531 aa).

Topologically, residues 1–28 (MEGESYNESTVNGTPVNHQALERHGLWE) are extracellular. N-linked (GlcNAc...) asparagine glycosylation is present at N7. A helical transmembrane segment spans residues 29–52 (VITIAVVTAVVSLMTIVGNVLVMI). Over 53-65 (SFKVNSQLKTVNN) the chain is Cytoplasmic. The helical transmembrane segment at 66–86 (YYLLSLACADLIIGIFSMNLY) threads the bilayer. The Extracellular segment spans residues 87-103 (TTYILMGRWVLGSLACD). Residues C102 and C182 are joined by a disulfide bond. The helical transmembrane segment at 104–125 (LWLALDYVASNASVMNLLVISF) threads the bilayer. Over 126-145 (DRYFSITRPLTYRAKRTPKR) the chain is Cytoplasmic. Residues 146–168 (AGIMIGLAWLVSFILWAPAILCW) traverse the membrane as a helical segment. Over 169 to 190 (QYLVGKRTVPPDECQIQFLSEP) the chain is Extracellular. The helical transmembrane segment at 191-213 (TITFGTAIAAFYIPVSVMTILYC) threads the bilayer. At 214–442 (RIYRETEKRT…LVKERKAAQT (229 aa)) the chain is on the cytoplasmic side. 2 disordered regions span residues 259–295 (SLAQRERNQASWSSSRRSTSTTGKTTQATDLSADWEK) and 327–346 (EAKESPGKESNTQETKETVV). Positions 267-287 (QASWSSSRRSTSTTGKTTQAT) are enriched in low complexity. Residues 334–346 (KESNTQETKETVV) show a composition bias toward polar residues. Residues 443–463 (LSAILLAFIITWTPYNIMVLV) traverse the membrane as a helical segment. Residues 464 to 477 (STFCDKCVPVTLWH) lie on the Extracellular side of the membrane. The chain crosses the membrane as a helical span at residues 478 to 497 (LGYWLCYVNSTINPICYALC). At 498-531 (NRTFRKTFKLLLLCRWKKKKVEEKLYWQGNSKLP) the chain is on the cytoplasmic side. Residues T500 and T504 each carry the phosphothreonine modification.

It belongs to the G-protein coupled receptor 1 family. Muscarinic acetylcholine receptor subfamily. CHRM5 sub-subfamily.

It localises to the cell membrane. The protein localises to the postsynaptic cell membrane. The muscarinic acetylcholine receptor mediates various cellular responses, including inhibition of adenylate cyclase, breakdown of phosphoinositides and modulation of potassium channels through the action of G proteins. Primary transducing effect is Pi turnover. The sequence is that of Muscarinic acetylcholine receptor M5 (Chrm5) from Rattus norvegicus (Rat).